Reading from the N-terminus, the 327-residue chain is MANNASLEQDQNHCSAINNSIPLTQGKLPTLTLSGKIRVTVTFFLFLLSTAFNASFLVKLQRWTQKRKKGKKLSRMKVLLKHLTLANLLETLIVMPLDGMWNITVQWYAGEFLCKVLSYLKLFSMYAPAFMMVVISLDRSLAVTQPLAVQSKSKLERSMTSLAWILSIVFAGPQLYIFRMIYLADGSGPAVFSQCVTHCSFPQWWHEAFYNFFTFSCLFIIPLLIMLICNAKIIFALTRVLHQDPRKLQLNQSKNNIPRARLRTLKMTVAFGTSFVICWTPYYVLGIWYWFDPEMLNRVSEPVNHFFFLFAFLNPCFDPLIYGYFSL.

At 1–38 the chain is on the extracellular side; the sequence is MANNASLEQDQNHCSAINNSIPLTQGKLPTLTLSGKIR. Residues Asn-4 and Asn-18 are each glycosylated (N-linked (GlcNAc...) asparagine). A helical membrane pass occupies residues 39-58; sequence VTVTFFLFLLSTAFNASFLV. The Cytoplasmic segment spans residues 59–77; that stretch reads KLQRWTQKRKKGKKLSRMK. A helical transmembrane segment spans residues 78–97; the sequence is VLLKHLTLANLLETLIVMPL. The Extracellular portion of the chain corresponds to 98–115; the sequence is DGMWNITVQWYAGEFLCK. The N-linked (GlcNAc...) asparagine glycan is linked to Asn-102. An intrachain disulfide couples Cys-114 to Cys-195. Residues 116-137 traverse the membrane as a helical segment; it reads VLSYLKLFSMYAPAFMMVVISL. Topologically, residues 138–164 are cytoplasmic; it reads DRSLAVTQPLAVQSKSKLERSMTSLAW. A helical membrane pass occupies residues 165-184; that stretch reads ILSIVFAGPQLYIFRMIYLA. At 185-211 the chain is on the extracellular side; the sequence is DGSGPAVFSQCVTHCSFPQWWHEAFYN. Residues 212 to 231 form a helical membrane-spanning segment; that stretch reads FFTFSCLFIIPLLIMLICNA. Topologically, residues 232 to 280 are cytoplasmic; it reads KIIFALTRVLHQDPRKLQLNQSKNNIPRARLRTLKMTVAFGTSFVICWT. A helical membrane pass occupies residues 281 to 299; it reads PYYVLGIWYWFDPEMLNRV. At 300 to 305 the chain is on the extracellular side; that stretch reads SEPVNH. The helical transmembrane segment at 306 to 325 threads the bilayer; sequence FFFLFAFLNPCFDPLIYGYF. Residues 326-327 lie on the Cytoplasmic side of the membrane; that stretch reads SL.

This sequence belongs to the G-protein coupled receptor 1 family.

The protein resides in the cell membrane. In terms of biological role, receptor for gonadotropin releasing hormone (GnRH) that mediates the action of GnRH to stimulate the secretion of the gonadotropic hormones luteinizing hormone (LH) and follicle-stimulating hormone (FSH). This receptor mediates its action by association with G-proteins that activate a phosphatidylinositol-calcium second messenger system. The chain is Gonadotropin-releasing hormone receptor (Gnrhr) from Rattus norvegicus (Rat).